Reading from the N-terminus, the 490-residue chain is MSGNEDFIYDDNSSSSISNQTDGGGGGGSSNNNSGGNANNNNNEGDREQDRYLPIANIIRIMKKALPNNAKVAKDAKETVQDCVSEFISFITSEASDKCQQEKRKTINGEDIIAAMVSLGFENYVEPLKVYLLKYRETEKNSNNKRSPKKSESSSPPESPPLAHLDNSINSGYQPPPPPQQQQQQPPQVQQQQQQQQQQQQQQLQQQQQLQQHQQQQLQPQQQQQHLQQHLQQQQPQQQQQPPQQQQQQLTTTTTTTSTNNQQYQQQPQQQQQQQQQQQQQQQQQQQQQQQQQQQQQQQQQQQQQVQPPYILQQHNIQQPNVFLNQQAQQQQQQQQQQQQPMMNIQSHQQQFPQQHQIQQHLQQQHQHLQQIHNMQPPHQQMQFNQQFQMSQQIQMPQQFSNNNNNNNNNNNNNNNNNNNNNSNNNNNNNNNNNNNNNNPNNNINNNLNNSSNSLHNSGNSLHNSGNSGQIPPLYQQPYISTNPEYPSTS.

The interval 1–48 (MSGNEDFIYDDNSSSSISNQTDGGGGGGSSNNNSGGNANNNNNEGDRE) is disordered. A compositionally biased stretch (low complexity) spans 30–43 (SNNNSGGNANNNNN). The DNA-binding element occupies 53 to 59 (LPIANII). The segment at 80–91 (VQDCVSEFISFI) is subunit association domain (SAD). 2 disordered regions span residues 139–195 (EKNS…QQQQ) and 221–264 (QQQQ…NQQY). A compositionally biased stretch (low complexity) spans 181–195 (QQQQQPPQVQQQQQQ). The stretch at 188–219 (QVQQQQQQQQQQQQQQLQQQQQLQQHQQQQLQ) forms a coiled coil. The stretch at 269-307 (QQQQQQQQQQQQQQQQQQQQQQQQQQQQQQQQQQQQQVQ) forms a coiled coil. Disordered stretches follow at residues 325–370 (NQQA…QHLQ) and 399–490 (QFSN…PSTS). A compositionally biased stretch (low complexity) spans 399–468 (QFSNNNNNNN…GNSLHNSGNS (70 aa)). A compositionally biased stretch (polar residues) spans 478-490 (PYISTNPEYPSTS).

It belongs to the NFYB/HAP3 subunit family. Heterotrimeric transcription factor composed of three components, nfyA, nfyB and nfyC. nfyB and nfyC must interact and dimerize for nfyA association and DNA binding.

Its subcellular location is the nucleus. Functionally, component of the NF-Y/HAP transcription factor complex. The NF-Y complex stimulates the transcription of various genes by recognizing and binding to a CCAAT motif in promoters. The chain is Nuclear transcription factor Y subunit beta (nfyB) from Dictyostelium discoideum (Social amoeba).